The following is a 109-amino-acid chain: Putative transporter-like protein YIL171W (109 aa).

Over residues 1-22 (MSGVNNTSANDLSTTESNSNSA) the composition is skewed to polar residues. Residues 1–40 (MSGVNNTSANDLSTTESNSNSAVGAPSVKTEHGDSKDSLN) are disordered. Residues 1 to 56 (MSGVNNTSANDLSTTESNSNSAVGAPSVKTEHGDSKDSLNLDATEAPIDLPQKPLS) lie on the Cytoplasmic side of the membrane. Residues 29 to 39 (KTEHGDSKDSL) are compositionally biased toward basic and acidic residues. Residues 57–77 (AYTTVAILCLMIAFGGFIFGW) form a helical membrane-spanning segment. Topologically, residues 78 to 109 (DTGTISGFVNLSDFIRRFGQKKTTRGLTTYRK) are extracellular. The N-linked (GlcNAc...) asparagine glycan is linked to asparagine 87.

Belongs to the major facilitator superfamily. Sugar transporter (TC 2.A.1.1) family.

The protein localises to the cell membrane. In terms of biological role, probable glucose transporter. This Saccharomyces cerevisiae (strain ATCC 204508 / S288c) (Baker's yeast) protein is Putative transporter-like protein YIL171W.